The following is a 124-amino-acid chain: Ribonuclease pancreatic (124 aa).

Basic and acidic residues predominate over residues 1 to 13 (KETSAQKFERQHM). The segment at 1-25 (KETSAQKFERQHMDSTGSSSSSPTY) is disordered. Substrate-binding residues include Lys-7 and Arg-10. Residue His-12 is the Proton acceptor of the active site. Intrachain disulfides connect Cys-26/Cys-84, Cys-40/Cys-95, Cys-58/Cys-110, and Cys-65/Cys-72. Substrate contacts are provided by residues 41 to 45 (KPVNT), Lys-66, and Arg-85. His-119 functions as the Proton donor in the catalytic mechanism.

This sequence belongs to the pancreatic ribonuclease family. As to quaternary structure, monomer. Interacts with and forms tight 1:1 complexes with RNH1. Dimerization of two such complexes may occur. Interaction with RNH1 inhibits this protein. Pancreas.

It localises to the secreted. It catalyses the reaction an [RNA] containing cytidine + H2O = an [RNA]-3'-cytidine-3'-phosphate + a 5'-hydroxy-ribonucleotide-3'-[RNA].. The catalysed reaction is an [RNA] containing uridine + H2O = an [RNA]-3'-uridine-3'-phosphate + a 5'-hydroxy-ribonucleotide-3'-[RNA].. Endonuclease that catalyzes the cleavage of RNA on the 3' side of pyrimidine nucleotides. Acts on single-stranded and double-stranded RNA. In Ondatra zibethicus (Muskrat), this protein is Ribonuclease pancreatic (RNASE1).